Here is a 780-residue protein sequence, read N- to C-terminus: Aconitate hydratase, mitochondrial (780 aa).

The transit peptide at 1-27 (MAPYSLLVTRLQKALGVRQYHVASVLC) directs the protein to the mitochondrion. Lys31 is subject to N6-succinyllysine. Lys50 is subject to N6-acetyllysine; alternate. Lys50 is subject to N6-succinyllysine; alternate. A substrate-binding site is contributed by Gln99. Lys138 and Lys144 each carry N6-acetyllysine; alternate. 2 positions are modified to N6-succinyllysine; alternate: Lys138 and Lys144. Position 192–194 (192–194 (DSH)) interacts with substrate. Position 233 is an N6-acetyllysine; alternate (Lys233). Lys233 is subject to N6-succinyllysine; alternate. Cys385 contributes to the [4Fe-4S] cluster binding site. N6-succinyllysine is present on Lys411. Residues Cys448 and Cys451 each contribute to the [4Fe-4S] cluster site. Substrate is bound by residues Arg474 and Arg479. N6-acetyllysine; alternate occurs at positions 517 and 523. Lys517 and Lys523 each carry N6-succinyllysine; alternate. The segment covering 524–537 (LEAPDADELPRSDF) has biased composition (basic and acidic residues). Residues 524–560 (LEAPDADELPRSDFDPGQDTYQHPPKDSSGQRVDVSP) form a disordered region. Residue Lys549 is modified to N6-succinyllysine. Residues 551–560 (SSGQRVDVSP) show a composition bias toward polar residues. Ser559 is subject to Phosphoserine. Lys573 carries the N6-acetyllysine; alternate modification. The residue at position 573 (Lys573) is an N6-succinyllysine; alternate. Lys577 and Lys591 each carry N6-succinyllysine. Lys605 is subject to N6-acetyllysine; alternate. Lys605 bears the N6-succinyllysine; alternate mark. Arg607 is a binding site for substrate. N6-succinyllysine is present on Lys628. Ser670 is modified (phosphoserine). 670–671 (SR) contacts substrate. N6-succinyllysine is present on Lys689. Residues Lys723 and Lys730 each carry the N6-acetyllysine; alternate modification. N6-succinyllysine; alternate occurs at positions 723 and 730. Lys736, Lys739, and Lys743 each carry N6-acetyllysine.

Belongs to the aconitase/IPM isomerase family. Monomer. [4Fe-4S] cluster is required as a cofactor. In terms of processing, forms covalent cross-links mediated by transglutaminase TGM2, between a glutamine and the epsilon-amino group of a lysine residue, forming homopolymers and heteropolymers.

The protein resides in the mitochondrion. It catalyses the reaction citrate = D-threo-isocitrate. Its pathway is carbohydrate metabolism; tricarboxylic acid cycle; isocitrate from oxaloacetate: step 2/2. In terms of biological role, catalyzes the isomerization of citrate to isocitrate via cis-aconitate. The protein is Aconitate hydratase, mitochondrial (Aco2) of Mus musculus (Mouse).